Here is a 360-residue protein sequence, read N- to C-terminus: UDP-N-acetylglucosamine--N-acetylmuramyl-(pentapeptide) pyrophosphoryl-undecaprenol N-acetylglucosamine transferase (360 aa).

UDP-N-acetyl-alpha-D-glucosamine contacts are provided by residues 12 to 14 (TGG), Asn124, Arg161, Ser189, Ile243, and Gln288.

Belongs to the glycosyltransferase 28 family. MurG subfamily.

It localises to the cell inner membrane. The catalysed reaction is di-trans,octa-cis-undecaprenyl diphospho-N-acetyl-alpha-D-muramoyl-L-alanyl-D-glutamyl-meso-2,6-diaminopimeloyl-D-alanyl-D-alanine + UDP-N-acetyl-alpha-D-glucosamine = di-trans,octa-cis-undecaprenyl diphospho-[N-acetyl-alpha-D-glucosaminyl-(1-&gt;4)]-N-acetyl-alpha-D-muramoyl-L-alanyl-D-glutamyl-meso-2,6-diaminopimeloyl-D-alanyl-D-alanine + UDP + H(+). The protein operates within cell wall biogenesis; peptidoglycan biosynthesis. Functionally, cell wall formation. Catalyzes the transfer of a GlcNAc subunit on undecaprenyl-pyrophosphoryl-MurNAc-pentapeptide (lipid intermediate I) to form undecaprenyl-pyrophosphoryl-MurNAc-(pentapeptide)GlcNAc (lipid intermediate II). The chain is UDP-N-acetylglucosamine--N-acetylmuramyl-(pentapeptide) pyrophosphoryl-undecaprenol N-acetylglucosamine transferase from Acidithiobacillus ferrooxidans (strain ATCC 23270 / DSM 14882 / CIP 104768 / NCIMB 8455) (Ferrobacillus ferrooxidans (strain ATCC 23270)).